A 66-amino-acid polypeptide reads, in one-letter code: Photosystem II reaction center protein J (66 aa).

Residues 37–57 (LWLVATAGGMAVIFVVGLFFY) form a helical membrane-spanning segment.

It belongs to the PsbJ family. In terms of assembly, PSII is composed of 1 copy each of membrane proteins PsbA, PsbB, PsbC, PsbD, PsbE, PsbF, PsbH, PsbI, PsbJ, PsbK, PsbL, PsbM, PsbT, PsbX, PsbY, PsbZ, Psb30/Ycf12, peripheral proteins PsbO, CyanoQ (PsbQ), PsbU, PsbV and a large number of cofactors. It forms dimeric complexes.

It localises to the cellular thylakoid membrane. One of the components of the core complex of photosystem II (PSII). PSII is a light-driven water:plastoquinone oxidoreductase that uses light energy to abstract electrons from H(2)O, generating O(2) and a proton gradient subsequently used for ATP formation. It consists of a core antenna complex that captures photons, and an electron transfer chain that converts photonic excitation into a charge separation. In Synechococcus sp. (strain CC9311), this protein is Photosystem II reaction center protein J.